We begin with the raw amino-acid sequence, 248 residues long: 2,3-bisphosphoglycerate-dependent phosphoglycerate mutase (248 aa).

Substrate is bound by residues 8–15, 21–22, Arg-60, 87–90, Lys-98, 114–115, and 183–184; these read RHGESQWN, TG, ERHY, RR, and GN. Catalysis depends on His-9, which acts as the Tele-phosphohistidine intermediate. Glu-87 (proton donor/acceptor) is an active-site residue.

It belongs to the phosphoglycerate mutase family. BPG-dependent PGAM subfamily. In terms of assembly, homodimer.

The catalysed reaction is (2R)-2-phosphoglycerate = (2R)-3-phosphoglycerate. It participates in carbohydrate degradation; glycolysis; pyruvate from D-glyceraldehyde 3-phosphate: step 3/5. In terms of biological role, catalyzes the interconversion of 2-phosphoglycerate and 3-phosphoglycerate. This is 2,3-bisphosphoglycerate-dependent phosphoglycerate mutase from Alteromonas mediterranea (strain DSM 17117 / CIP 110805 / LMG 28347 / Deep ecotype).